The sequence spans 396 residues: 1-deoxy-D-xylulose 5-phosphate reductoisomerase (396 aa).

The NADPH site is built by T15, G16, S17, I18, G41, and N129. 1-deoxy-D-xylulose 5-phosphate is bound at residue K130. E131 contributes to the NADPH binding site. D155 contributes to the Mn(2+) binding site. 1-deoxy-D-xylulose 5-phosphate contacts are provided by S156, E157, S182, and H205. E157 is a binding site for Mn(2+). G211 provides a ligand contact to NADPH. 4 residues coordinate 1-deoxy-D-xylulose 5-phosphate: S218, N223, K224, and E227. E227 contributes to the Mn(2+) binding site.

This sequence belongs to the DXR family. It depends on Mg(2+) as a cofactor. The cofactor is Mn(2+).

The catalysed reaction is 2-C-methyl-D-erythritol 4-phosphate + NADP(+) = 1-deoxy-D-xylulose 5-phosphate + NADPH + H(+). Its pathway is isoprenoid biosynthesis; isopentenyl diphosphate biosynthesis via DXP pathway; isopentenyl diphosphate from 1-deoxy-D-xylulose 5-phosphate: step 1/6. Its function is as follows. Catalyzes the NADPH-dependent rearrangement and reduction of 1-deoxy-D-xylulose-5-phosphate (DXP) to 2-C-methyl-D-erythritol 4-phosphate (MEP). In Xanthomonas oryzae pv. oryzae (strain MAFF 311018), this protein is 1-deoxy-D-xylulose 5-phosphate reductoisomerase.